We begin with the raw amino-acid sequence, 179 residues long: Arginine repressor (179 aa).

The protein belongs to the ArgR family.

Its subcellular location is the cytoplasm. It functions in the pathway amino-acid biosynthesis; L-arginine biosynthesis [regulation]. Functionally, regulates arginine biosynthesis genes. The chain is Arginine repressor from Renibacterium salmoninarum (strain ATCC 33209 / DSM 20767 / JCM 11484 / NBRC 15589 / NCIMB 2235).